A 273-amino-acid polypeptide reads, in one-letter code: MAIHLYKTSTSSTRNGAVDSQVKSNPRNNLIYGQHHCGKGRNARGIITAGHRGGGHKRLYRKIDFRRNKKDISGRIVTIEYDPNRNAYICLIHYGDGEKRYILHPRGAIIGDTIVSGTEVPISMGNALPLTDMPLGTAIHNIEITLGKGGQLARAAGAVAKLIAKEGKSATLRLPSGEVRLISKNCSATVGQVGNVGANQQSLGRAGSKCWLGKRPVVRGVVMNPVDHPHGGGEGRAPIGRKKPTTPWGYPALGRRSRKRNKYSDRFILRRRK.

2 disordered regions span residues 1 to 23 (MAIHLYKTSTSSTRNGAVDSQVK) and 224 to 273 (NPVD…RRRK). The segment covering 262–273 (KYSDRFILRRRK) has biased composition (basic and acidic residues).

It belongs to the universal ribosomal protein uL2 family. As to quaternary structure, part of the 50S ribosomal subunit.

The protein resides in the plastid. The protein localises to the chloroplast. This is Large ribosomal subunit protein uL2cz/uL2cy (rpl2-A) from Acorus calamus var. americanus (American sweet flag).